Reading from the N-terminus, the 317-residue chain is Putative HTH-type transcriptional regulatory protein Mlab_0160 (317 aa).

The HTH cro/C1-type domain maps to 132–189 (LRTLREEQAMSLGDLAHALGVSRRTISKYEGGMGTTLEMAMRLEEFFNDDIVMPIDLL). The H-T-H motif DNA-binding region spans 143–162 (LGDLAHALGVSRRTISKYEG). The tract at residues 199-219 (VPASLASGHNPESDAQPKRPE) is disordered. Basic and acidic residues predominate over residues 209–219 (PESDAQPKRPE).

This is Putative HTH-type transcriptional regulatory protein Mlab_0160 from Methanocorpusculum labreanum (strain ATCC 43576 / DSM 4855 / Z).